The sequence spans 475 residues: Aspartyl/glutamyl-tRNA(Asn/Gln) amidotransferase subunit B (475 aa).

It belongs to the GatB/GatE family. GatB subfamily. In terms of assembly, heterotrimer of A, B and C subunits.

It carries out the reaction L-glutamyl-tRNA(Gln) + L-glutamine + ATP + H2O = L-glutaminyl-tRNA(Gln) + L-glutamate + ADP + phosphate + H(+). The catalysed reaction is L-aspartyl-tRNA(Asn) + L-glutamine + ATP + H2O = L-asparaginyl-tRNA(Asn) + L-glutamate + ADP + phosphate + 2 H(+). In terms of biological role, allows the formation of correctly charged Asn-tRNA(Asn) or Gln-tRNA(Gln) through the transamidation of misacylated Asp-tRNA(Asn) or Glu-tRNA(Gln) in organisms which lack either or both of asparaginyl-tRNA or glutaminyl-tRNA synthetases. The reaction takes place in the presence of glutamine and ATP through an activated phospho-Asp-tRNA(Asn) or phospho-Glu-tRNA(Gln). The sequence is that of Aspartyl/glutamyl-tRNA(Asn/Gln) amidotransferase subunit B from Chlorobium limicola (strain DSM 245 / NBRC 103803 / 6330).